The sequence spans 334 residues: Glycerol-1-phosphate dehydrogenase [NAD(P)+] (334 aa).

NAD(+) is bound by residues 77–81 and 99–102; these read GRPID and TTAS. Residue D104 participates in substrate binding. S108 contacts NAD(+). Residue D147 participates in substrate binding. Zn(2+) is bound by residues D147 and H225. Substrate is bound at residue H229. H246 is a Zn(2+) binding site.

This sequence belongs to the glycerol-1-phosphate dehydrogenase family. The cofactor is Zn(2+).

The protein localises to the cytoplasm. The catalysed reaction is sn-glycerol 1-phosphate + NAD(+) = dihydroxyacetone phosphate + NADH + H(+). It carries out the reaction sn-glycerol 1-phosphate + NADP(+) = dihydroxyacetone phosphate + NADPH + H(+). Its pathway is membrane lipid metabolism; glycerophospholipid metabolism. Its function is as follows. Catalyzes the NAD(P)H-dependent reduction of dihydroxyacetonephosphate (DHAP or glycerone phosphate) to glycerol 1-phosphate (G1P). The G1P thus generated is used as the glycerophosphate backbone of phospholipids in the cellular membranes of Archaea. The chain is Glycerol-1-phosphate dehydrogenase [NAD(P)+] from Methanococcus maripaludis (strain C7 / ATCC BAA-1331).